Here is a 272-residue protein sequence, read N- to C-terminus: Phosphate import ATP-binding protein PstB (272 aa).

In terms of domain architecture, ABC transporter spans 26–267 (LDIKNLDLYY…PSEKQTEDYI (242 aa)). 58 to 65 (GPSGCGKS) is an ATP binding site.

Belongs to the ABC transporter superfamily. Phosphate importer (TC 3.A.1.7) family. In terms of assembly, the complex is composed of two ATP-binding proteins (PstB), two transmembrane proteins (PstC and PstA) and a solute-binding protein (PstS).

Its subcellular location is the cell inner membrane. It catalyses the reaction phosphate(out) + ATP + H2O = ADP + 2 phosphate(in) + H(+). Part of the ABC transporter complex PstSACB involved in phosphate import. Responsible for energy coupling to the transport system. The sequence is that of Phosphate import ATP-binding protein PstB from Idiomarina loihiensis (strain ATCC BAA-735 / DSM 15497 / L2-TR).